The chain runs to 182 residues: Large ribosomal subunit protein uL10 (182 aa).

The protein belongs to the universal ribosomal protein uL10 family. Part of the ribosomal stalk of the 50S ribosomal subunit. The N-terminus interacts with L11 and the large rRNA to form the base of the stalk. The C-terminus forms an elongated spine to which L12 dimers bind in a sequential fashion forming a multimeric L10(L12)X complex.

In terms of biological role, forms part of the ribosomal stalk, playing a central role in the interaction of the ribosome with GTP-bound translation factors. This is Large ribosomal subunit protein uL10 from Microcystis aeruginosa (strain NIES-843 / IAM M-2473).